The sequence spans 408 residues: L-lactate oxidase (408 aa).

The FMN hydroxy acid dehydrogenase domain maps to asparagine 14 to tyrosine 370. Position 40 (tyrosine 40) interacts with pyruvate. FMN-binding positions include proline 93–alanine 95, serine 122, and glutamine 144. Residue tyrosine 146 coordinates pyruvate. Residue threonine 172 participates in FMN binding. Arginine 181 contacts pyruvate. FMN contacts are provided by lysine 241 and serine 263. Residues histidine 265 and arginine 268 each coordinate pyruvate. Residue histidine 265 is the Proton acceptor of the active site. FMN is bound by residues aspartate 296–arginine 300 and arginine 320.

This sequence belongs to the FMN-dependent alpha-hydroxy acid dehydrogenase family. In terms of assembly, homotetramer. It depends on FMN as a cofactor.

It catalyses the reaction a (2S)-2-hydroxycarboxylate + O2 = a 2-oxocarboxylate + H2O2. The catalysed reaction is (S)-lactate + O2 = pyruvate + H2O2. It carries out the reaction 2-hydroxyoctanoate + O2 = 2-oxooctanoate + H2O2. The enzyme catalyses glycolate + O2 = glyoxylate + H2O2. It catalyses the reaction mandelate + O2 = phenylglyoxylate + H2O2. The catalysed reaction is 2-hydroxyoctadecanoate + O2 = 2-oxooctadecanoate + H2O2. Oxidase that catalyzes the oxidation of a broad range of 2-hydroxyacids in vitro, such as (S)-lactate, 2-hydroxyoctanoate, and to a lesser extent glycolate, mandelate and 2-hydroxyoctadecanoate, to the corresponding 2-oxoacids, with a reduction of O2 to H2O2. May be involved in the utilization of L-lactate as an energy source for growth. This chain is L-lactate oxidase, found in Lactobacillus jensenii.